Here is a 270-residue protein sequence, read N- to C-terminus: MSTNNTIKTPYEDLLRTILEQGSHKDDRTGTGTTSLFGQQMRFDLTEAFPLITTKKVYWKGVIGELLWFLQGSSNVRWLQKRNIHIWDEWASEEGELGPVYGVQWRSWPTPDGQHVDQIAQALDILKNNPDSRRNIVSAWNVADLNNMALPPCHLLFQLYVADGKLSCQLYQRSADMFLGVPFNIASYSALTHMLAQQAGLKVGEFIWTGGDCHIYDNHREQVLTQLSREPRPYPQLTLRKASSIFDYDFDDFTIEGYDPHPAIRGEVAV.

DUMP-binding positions include Arg28 and 133–134 (RR). Residue Cys153 is the Nucleophile of the active site. DUMP is bound by residues 173 to 176 (RSAD), Asn184, and 214 to 216 (HIY). Asp176 contributes to the (6R)-5,10-methylene-5,6,7,8-tetrahydrofolate binding site. Ala269 is a binding site for (6R)-5,10-methylene-5,6,7,8-tetrahydrofolate.

Belongs to the thymidylate synthase family. Bacterial-type ThyA subfamily. Homodimer.

It localises to the cytoplasm. It catalyses the reaction dUMP + (6R)-5,10-methylene-5,6,7,8-tetrahydrofolate = 7,8-dihydrofolate + dTMP. The protein operates within pyrimidine metabolism; dTTP biosynthesis. Its function is as follows. Catalyzes the reductive methylation of 2'-deoxyuridine-5'-monophosphate (dUMP) to 2'-deoxythymidine-5'-monophosphate (dTMP) while utilizing 5,10-methylenetetrahydrofolate (mTHF) as the methyl donor and reductant in the reaction, yielding dihydrofolate (DHF) as a by-product. This enzymatic reaction provides an intracellular de novo source of dTMP, an essential precursor for DNA biosynthesis. The polypeptide is Thymidylate synthase (Corynebacterium diphtheriae (strain ATCC 700971 / NCTC 13129 / Biotype gravis)).